Consider the following 231-residue polypeptide: Orotidine 5'-phosphate decarboxylase (231 aa).

Substrate contacts are provided by residues aspartate 12, lysine 34, 61–70, threonine 120, arginine 181, glutamine 190, glycine 210, and arginine 211; that span reads DLKFHDIPNT. Catalysis depends on lysine 63, which acts as the Proton donor.

The protein belongs to the OMP decarboxylase family. Type 1 subfamily. Homodimer.

The catalysed reaction is orotidine 5'-phosphate + H(+) = UMP + CO2. The protein operates within pyrimidine metabolism; UMP biosynthesis via de novo pathway; UMP from orotate: step 2/2. Functionally, catalyzes the decarboxylation of orotidine 5'-monophosphate (OMP) to uridine 5'-monophosphate (UMP). This chain is Orotidine 5'-phosphate decarboxylase, found in Alcanivorax borkumensis (strain ATCC 700651 / DSM 11573 / NCIMB 13689 / SK2).